We begin with the raw amino-acid sequence, 771 residues long: Probable exo-1,4-beta-xylosidase bxlB (771 aa).

An N-terminal signal peptide occupies residues 1–25 (MAHITSWHYGNAIALLVSLAPGALS). A glycan (N-linked (GlcNAc...) asparagine) is linked at Asn-67. Asp-293 is an active-site residue. 4 N-linked (GlcNAc...) asparagine glycosylation sites follow: Asn-305, Asn-345, Asn-423, and Asn-464.

It belongs to the glycosyl hydrolase 3 family.

Its subcellular location is the secreted. It catalyses the reaction Hydrolysis of (1-&gt;4)-beta-D-xylans, to remove successive D-xylose residues from the non-reducing termini.. Its pathway is glycan degradation; xylan degradation. Its function is as follows. Xylan 1,4-beta-xylosidase involved in the hydrolysis of xylan, a major structural heterogeneous polysaccharide found in plant biomass representing the second most abundant polysaccharide in the biosphere, after cellulose. This is Probable exo-1,4-beta-xylosidase bxlB (bxlB) from Aspergillus fumigatus (strain CBS 144.89 / FGSC A1163 / CEA10) (Neosartorya fumigata).